The primary structure comprises 88 residues: Small ribosomal subunit protein bS20 (88 aa).

Positions 1–27 (MANSKTAKKRAIQSEKRRQHNASRRSM) are disordered.

The protein belongs to the bacterial ribosomal protein bS20 family.

Binds directly to 16S ribosomal RNA. The chain is Small ribosomal subunit protein bS20 from Shewanella amazonensis (strain ATCC BAA-1098 / SB2B).